Consider the following 115-residue polypeptide: Salivary protein gSG6 (115 aa).

Residues 1–28 (MAIRVELLLAMVLLPLLLLESVVPHAAA) form the signal peptide.

As to expression, female saliva (at protein level). Distal-lateral lobes of female salivary gland (at protein level). Not detected in male salivary gland (at protein level).

The protein resides in the secreted. Functionally, required for efficient probing and blood feeding. This is Salivary protein gSG6 from Anopheles gambiae (African malaria mosquito).